The sequence spans 776 residues: Transferrin receptor protein 1 (776 aa).

At 1–70 (MDHARAALSN…QPQRNGKRLC (70 aa)) the chain is on the cytoplasmic side. The Endocytosis signal signature appears at 19 to 22 (YTRF). Serine 23 is subject to Phosphoserine. Residue cysteine 70 is the site of S-palmitoyl cysteine attachment. A helical; Signal-anchor for type II membrane protein transmembrane segment spans residues 71-91 (FLVIAAVLLLLIGFLIGYLSY). Residues 92–776 (RGRIELAARC…GDIWETDNEF (685 aa)) are Extracellular-facing. In terms of domain architecture, PA spans 230–322 (SESGSVSGKP…GTGDPYTPGF (93 aa)). Residues asparagine 261, asparagine 326, and asparagine 391 are each glycosylated (N-linked (GlcNAc...) asparagine). Residues 586-776 (KGDTLENLRK…GDIWETDNEF (191 aa)) form a ligand-binding region. A Cell attachment site motif is present at residues 662-664 (RGD). N-linked (GlcNAc...) asparagine glycosylation is present at asparagine 738.

This sequence belongs to the peptidase M28 family. M28B subfamily. Homodimer; disulfide-linked. Binds one transferrin molecule per subunit. Stearoylated. Stearoylation does not affect iron uptake. In terms of processing, N- and O-glycosylated, phosphorylated and palmitoylated.

It localises to the cell membrane. Its subcellular location is the melanosome. Its function is as follows. Cellular uptake of iron occurs via receptor-mediated endocytosis of ligand-occupied transferrin receptor into specialized endosomes. Endosomal acidification leads to iron release. The apotransferrin-receptor complex is then recycled to the cell surface with a return to neutral pH and the concomitant loss of affinity of apotransferrin for its receptor. Transferrin receptor is necessary for development of erythrocytes and the nervous system. Acts as a lipid sensor that regulates mitochondrial fusion by regulating activation of the JNK pathway. When dietary levels of stearate (C18:0) are low, promotes activation of the JNK pathway, resulting in HUWE1-mediated ubiquitination and subsequent degradation of the mitofusin MFN2 and inhibition of mitochondrial fusion. When dietary levels of stearate (C18:0) are high, TFRC stearoylation inhibits activation of the JNK pathway and thus degradation of the mitofusin MFN2. Mediates uptake of NICOL1 into fibroblasts where it may regulate extracellular matrix production. In Gallus gallus (Chicken), this protein is Transferrin receptor protein 1 (TFRC).